The following is a 550-amino-acid chain: Chaperonin GroEL (550 aa).

ATP is bound by residues 30 to 33, lysine 51, 87 to 91, glycine 415, 479 to 481, and aspartate 495; these read TLGP, DGTTT, and NAA. Residues 526–550 are disordered; that stretch reads KDEKSDLGNSSAPSAGGMGGMGGMM. A compositionally biased stretch (gly residues) spans 541–550; the sequence is GGMGGMGGMM.

It belongs to the chaperonin (HSP60) family. In terms of assembly, forms a cylinder of 14 subunits composed of two heptameric rings stacked back-to-back. Interacts with the co-chaperonin GroES.

Its subcellular location is the cytoplasm. It carries out the reaction ATP + H2O + a folded polypeptide = ADP + phosphate + an unfolded polypeptide.. Its function is as follows. Together with its co-chaperonin GroES, plays an essential role in assisting protein folding. The GroEL-GroES system forms a nano-cage that allows encapsulation of the non-native substrate proteins and provides a physical environment optimized to promote and accelerate protein folding. In Buchnera aphidicola subsp. Baizongia pistaciae (strain Bp), this protein is Chaperonin GroEL.